Reading from the N-terminus, the 652-residue chain is MGNLQSEPSAGGGSRKVQPSDRAPDSRRTSLVEPEMTSQAMRLTRGLGVWFPGSATPPGLMVPREPQASPSTLPLTLERPSPVMPPPEEAAAVSAPPPAPAGTLLPGPSKWQKPAGTPVPRIRRLLEASHRGQGDPPSLRPLKPPPPPRQLSVKDTVPRAPSQFPPPLETWKPPPPLPSERQPADRRITPALATPASPPTESQAGPRNQGQTAGRARGGAPPHAGEGEMAQPADSESGLSLLCKITFKSRPSLAPPAASSSLAAKASLGGGGGGGLFAASGAISYAEVLKQGPLPPGAARPLGEVSRGAQEAEGGDGDGEGCSGPPSAPASQARALPPPPYTTFPGSKPKFDWVSAPDGPERHFRFNGAGGGIGAPRRRAAALSGPWGSPPPPPEQIHSAPGPRRPAPALLAPPTFIFPAPTNGEPMRPGPPGLQELPPLPPPTPPPTLQPPALQPTPLPVAPPLTPGLGHKESALAPTAAPALPPALAADQAPAPSPAPAPTVAEPSPPVSAPAPAAAPIKTRTRRNKGSRAARGATRKDGLHGDGPRERATATVPDSSGGGGGGSGASQTGAANTRAARHWLPFQVLNSCPCKCYCHHQPRHRRLPRNVSAWLSTSTNHLGEPPWVATIKLSGSLVAKLEHYDLQATHSN.

Disordered stretches follow at residues 1–39 (MGNLQSEPSAGGGSRKVQPSDRAPDSRRTSLVEPEMTSQ), 52–237 (PGSA…DSES), 251–273 (PSLAPPAASSSLAAKASLGGGGG), 291–473 (QGPL…GHKE), and 488–576 (LAAD…GAAN). Basic and acidic residues-rich tracts occupy residues 18–30 (QPSDRAPDSRRTS) and 124–133 (RLLEASHRGQ). Residues 123–486 (RRLLEASHRG…APTAAPALPP (364 aa)) form an interaction with GGNBP1 region. 2 stretches are compositionally biased toward pro residues: residues 138 to 149 (SLRPLKPPPPPR) and 163 to 178 (QFPPPLETWKPPPPLP). Residues 201–212 (ESQAGPRNQGQT) show a composition bias toward polar residues. Low complexity-rich tracts occupy residues 213–230 (AGRARGGAPPHAGEGEMA), 251–267 (PSLAPPAASSSLAAKAS), and 299–312 (ARPLGEVSRGAQEA). Serine 389 carries the post-translational modification Phosphoserine. Over residues 407-422 (APALLAPPTFIFPAPT) the composition is skewed to low complexity. Pro residues-rich tracts occupy residues 428–466 (RPGPPGLQELPPLPPPTPPPTLQPPALQPTPLPVAPPLT) and 495–513 (APSPAPAPTVAEPSPPVSA). The tract at residues 491–652 (DQAPAPSPAP…HYDLQATHSN (162 aa)) is interactions with ZNF403/GGNBP2 and OAZ3. A compositionally biased stretch (basic residues) spans 523–532 (TRTRRNKGSR). Basic and acidic residues predominate over residues 538–552 (TRKDGLHGDGPRERA).

Interacts with FANCL, GGNBP1 and ZNF403/GGNBP2.

May be involved in spermatogenesis. This Homo sapiens (Human) protein is Gametogenetin (GGN).